Reading from the N-terminus, the 121-residue chain is Small ribosomal subunit protein uS13 (121 aa).

A disordered region spans residues 97-121 (VRGQRTRTNARTRRGARKTVAGRKK). Positions 100–121 (QRTRTNARTRRGARKTVAGRKK) are enriched in basic residues.

This sequence belongs to the universal ribosomal protein uS13 family. Part of the 30S ribosomal subunit. Forms a loose heterodimer with protein S19. Forms two bridges to the 50S subunit in the 70S ribosome.

In terms of biological role, located at the top of the head of the 30S subunit, it contacts several helices of the 16S rRNA. In the 70S ribosome it contacts the 23S rRNA (bridge B1a) and protein L5 of the 50S subunit (bridge B1b), connecting the 2 subunits; these bridges are implicated in subunit movement. Contacts the tRNAs in the A and P-sites. This is Small ribosomal subunit protein uS13 from Prochlorococcus marinus (strain NATL2A).